The primary structure comprises 751 residues: WD repeat-containing protein 91 (751 aa).

Residues 188–212 (IQEENESLRHKLFALQAESSRMKKE) are a coiled coil. Residues 264-395 (LSQSKKGPAR…ASSTESVGVR (132 aa)) are disordered. Over residues 278-287 (SGASPTQTGS) the composition is skewed to polar residues. Positions 334–346 (RLQEHGKERRELL) are enriched in basic and acidic residues. A compositionally biased stretch (polar residues) spans 377–391 (QAETSTKMPASSTES). WD repeat units lie at residues 410–449 (EHHS…QTKA), 452–492 (ISKS…NLCE), 497–559 (EDMP…QQLQ), 564–603 (PEPI…CAMS), 606–645 (AHDG…LKIS), 668–706 (VQFP…KVLE), and 713–751 (GHRA…AQKS).

The protein belongs to the WD repeat WDR91 family.

Its subcellular location is the early endosome membrane. It is found in the late endosome membrane. Functionally, functions as a negative regulator of the PI3 kinase/PI3K activity associated with endosomal membranes. By modifying the phosphatidylinositol 3-phosphate/PtdInsP3 content of endosomal membranes may regulate endosome fusion, recycling, sorting and early to late endosome transport. This is WD repeat-containing protein 91 from Gallus gallus (Chicken).